A 56-amino-acid polypeptide reads, in one-letter code: Small ribosomal subunit protein uS14 (56 aa).

Cys21, Cys24, Cys39, and Cys42 together coordinate Zn(2+).

The protein belongs to the universal ribosomal protein uS14 family. Zn(2+) is required as a cofactor.

The chain is Small ribosomal subunit protein uS14 (rps29A) from Guillardia theta (Cryptophyte).